A 438-amino-acid polypeptide reads, in one-letter code: Probable chaperone protein ClpB 1 (438 aa).

Positions 1 to 94 form a coiled coil; it reads MNTADTRQRL…NNRKIEARQA (94 aa). Residues 1-118 form a linker region; the sequence is MNTADTRQRL…IADIVSRWTG (118 aa). The segment at 128–345 is NBD2; that stretch reads ERQKLLGIES…RIDEVILFTP (218 aa). 178–185 provides a ligand contact to ATP; the sequence is GPTGVGKT. Residues 346 to 438 form a C-terminal region; sequence LTRENLREIV…ENDAIVMKKK (93 aa).

It belongs to the ClpA/ClpB family. Homohexamer. The oligomerization is ATP-dependent.

The protein resides in the cytoplasm. Its function is as follows. Part of a stress-induced multi-chaperone system, it is involved in the recovery of the cell from heat-induced damage, in cooperation with DnaK, DnaJ and GrpE. Acts before DnaK, in the processing of protein aggregates. Protein binding stimulates the ATPase activity; ATP hydrolysis unfolds the denatured protein aggregates, which probably helps expose new hydrophobic binding sites on the surface of ClpB-bound aggregates, contributing to the solubilization and refolding of denatured protein aggregates by DnaK. The protein is Probable chaperone protein ClpB 1 (clpB1) of Chlorobaculum tepidum (strain ATCC 49652 / DSM 12025 / NBRC 103806 / TLS) (Chlorobium tepidum).